The chain runs to 323 residues: tRNA U34 carboxymethyltransferase (323 aa).

Carboxy-S-adenosyl-L-methionine-binding positions include lysine 91, tryptophan 105, lysine 110, glycine 130, 181–182 (IE), methionine 196, tyrosine 200, and arginine 315.

The protein belongs to the class I-like SAM-binding methyltransferase superfamily. CmoB family. In terms of assembly, homotetramer.

It catalyses the reaction carboxy-S-adenosyl-L-methionine + 5-hydroxyuridine(34) in tRNA = 5-carboxymethoxyuridine(34) in tRNA + S-adenosyl-L-homocysteine + H(+). Its function is as follows. Catalyzes carboxymethyl transfer from carboxy-S-adenosyl-L-methionine (Cx-SAM) to 5-hydroxyuridine (ho5U) to form 5-carboxymethoxyuridine (cmo5U) at position 34 in tRNAs. The sequence is that of tRNA U34 carboxymethyltransferase from Yersinia pseudotuberculosis serotype O:3 (strain YPIII).